The primary structure comprises 89 residues: Small ribosomal subunit protein uS19 (89 aa).

This sequence belongs to the universal ribosomal protein uS19 family.

Protein S19 forms a complex with S13 that binds strongly to the 16S ribosomal RNA. This Xylella fastidiosa (strain 9a5c) protein is Small ribosomal subunit protein uS19.